The chain runs to 382 residues: Anhydro-N-acetylmuramic acid kinase (382 aa).

9–16 lines the ATP pocket; it reads GTSLDGID.

This sequence belongs to the anhydro-N-acetylmuramic acid kinase family.

It carries out the reaction 1,6-anhydro-N-acetyl-beta-muramate + ATP + H2O = N-acetyl-D-muramate 6-phosphate + ADP + H(+). Its pathway is amino-sugar metabolism; 1,6-anhydro-N-acetylmuramate degradation. It participates in cell wall biogenesis; peptidoglycan recycling. Catalyzes the specific phosphorylation of 1,6-anhydro-N-acetylmuramic acid (anhMurNAc) with the simultaneous cleavage of the 1,6-anhydro ring, generating MurNAc-6-P. Is required for the utilization of anhMurNAc either imported from the medium or derived from its own cell wall murein, and thus plays a role in cell wall recycling. This chain is Anhydro-N-acetylmuramic acid kinase, found in Bacillus cereus (strain AH820).